The chain runs to 165 residues: 6,7-dimethyl-8-ribityllumazine synthase (165 aa).

5-amino-6-(D-ribitylamino)uracil-binding positions include Phe-22, 56-58 (SME), and 80-82 (AVI). 85–86 (ET) is a binding site for (2S)-2-hydroxy-3-oxobutyl phosphate. His-88 serves as the catalytic Proton donor. Phe-113 is a 5-amino-6-(D-ribitylamino)uracil binding site. Residue Arg-127 coordinates (2S)-2-hydroxy-3-oxobutyl phosphate.

The protein belongs to the DMRL synthase family.

It catalyses the reaction (2S)-2-hydroxy-3-oxobutyl phosphate + 5-amino-6-(D-ribitylamino)uracil = 6,7-dimethyl-8-(1-D-ribityl)lumazine + phosphate + 2 H2O + H(+). It functions in the pathway cofactor biosynthesis; riboflavin biosynthesis; riboflavin from 2-hydroxy-3-oxobutyl phosphate and 5-amino-6-(D-ribitylamino)uracil: step 1/2. Catalyzes the formation of 6,7-dimethyl-8-ribityllumazine by condensation of 5-amino-6-(D-ribitylamino)uracil with 3,4-dihydroxy-2-butanone 4-phosphate. This is the penultimate step in the biosynthesis of riboflavin. In Thermotoga petrophila (strain ATCC BAA-488 / DSM 13995 / JCM 10881 / RKU-1), this protein is 6,7-dimethyl-8-ribityllumazine synthase.